The sequence spans 277 residues: Phosphoribosylaminoimidazole-succinocarboxamide synthase (277 aa).

This sequence belongs to the SAICAR synthetase family.

The enzyme catalyses 5-amino-1-(5-phospho-D-ribosyl)imidazole-4-carboxylate + L-aspartate + ATP = (2S)-2-[5-amino-1-(5-phospho-beta-D-ribosyl)imidazole-4-carboxamido]succinate + ADP + phosphate + 2 H(+). Its pathway is purine metabolism; IMP biosynthesis via de novo pathway; 5-amino-1-(5-phospho-D-ribosyl)imidazole-4-carboxamide from 5-amino-1-(5-phospho-D-ribosyl)imidazole-4-carboxylate: step 1/2. This is Phosphoribosylaminoimidazole-succinocarboxamide synthase from Salinispora arenicola (strain CNS-205).